The primary structure comprises 48 residues: Cytochrome b559 subunit beta (48 aa).

The chain crosses the membrane as a helical span at residues 23–39 (WLAVHALAIPTVFFLGA). A heme-binding site is contributed by histidine 27.

This sequence belongs to the PsbE/PsbF family. In terms of assembly, heterodimer of an alpha subunit and a beta subunit. PSII is composed of 1 copy each of membrane proteins PsbA, PsbB, PsbC, PsbD, PsbE, PsbF, PsbH, PsbI, PsbJ, PsbK, PsbL, PsbM, PsbT, PsbX, PsbY, Psb30/Ycf12, peripheral proteins PsbO, CyanoQ (PsbQ), PsbU, PsbV and a large number of cofactors. It forms dimeric complexes. Heme b serves as cofactor.

Its subcellular location is the cellular thylakoid membrane. Functionally, this b-type cytochrome is tightly associated with the reaction center of photosystem II (PSII). PSII is a light-driven water:plastoquinone oxidoreductase that uses light energy to abstract electrons from H(2)O, generating O(2) and a proton gradient subsequently used for ATP formation. It consists of a core antenna complex that captures photons, and an electron transfer chain that converts photonic excitation into a charge separation. The chain is Cytochrome b559 subunit beta from Prochlorococcus marinus (strain SARG / CCMP1375 / SS120).